The primary structure comprises 868 residues: MSLQASEGCPGLGTNVFVPQSPQTDEEGSRSGRSFSEFEDTQDLDTPGLPPFCPMAPWGSEEGLSPCHLLTVRVIRMKNVRQADMLSQTDCFVSLWLPTASQKKLRTRTISNCPNPEWNESFNFQIQSRVKNVLELSVCDEDTVTPDDHLLTVLYDLTKLCFRKKTHVKFPLNPQGMEELEVEFLLEESPSPPETLVTNGVLVSRQVSCLEVHAQSRRRRKREKMKDLLVMVNESFENTQRVRPCLEPCCPTSACFQTAACFHYPKYFQSQVHVEVPKSHWSCGLCCRSRKKGPISQPLDCLSDGQVMTLPVGESYELHMKSTPCPETLDVRLGFSLCPAELEFLQKRKVVVAKALKQVLQLEEDLQEDEVPLIAIMATGGGTRSMTSMYGHLLGLQKLNLLDCASYITGLSGATWTMATLYRDPDWSSKNLEPAIFEARRHVVKDKLPSLFPDQLRKFQEELRQRSQEGYRVTFTDFWGLLIETCLGDERNECKLSDQRAALSCGQNPLPIYLTINVKDDVSNQDFREWFEFSPYEVGLQKYGAFIPSELFGSEFFMGRLVKRIPESRICYMLGLWSSIFSLNLLDAWNLSHTSEEFFHRWTREKVQDIEDEPILPEIPKCDANILETTVVIPGSWLSNSFREILTHRSFVSEFHNFLSGLQLHTNYLQNGQFSRWKDTVLDGFPNQLTESANHLCLLDTAFFVNSSYPPLLRPERKADLIIHLNYCAGSQTKPLKQTCEYCTVQNIPFPKYELPDENENLKECYLMENPQEPDAPIVTFFPLINDTFRKYKAPGVERSPEELEQGQVDIYGPKTPYATKELTYTEATFDKLVKLSEYNILNNKDTLLQALRLAVEKKKRLKGQCPS.

A disordered region spans residues 1–46; the sequence is MSLQASEGCPGLGTNVFVPQSPQTDEEGSRSGRSFSEFEDTQDLDT. In terms of domain architecture, C2 spans 46–170; that stretch reads TPGLPPFCPM…CFRKKTHVKF (125 aa). Residues D84, D90, D140, D142, and D148 each coordinate Ca(2+). The PLA2c domain maps to 324–856; it reads PCPETLDVRL…TLLQALRLAV (533 aa). Catalysis depends on S412, which acts as the Nucleophile. The active-site Proton acceptor is the D700. S800 carries the phosphoserine modification. A required for localization at membrane structures region spans residues 857–868; that stretch reads EKKKRLKGQCPS.

Requires Ca(2+) as cofactor.

The protein resides in the cytoplasm. Its subcellular location is the cytosol. The protein localises to the early endosome membrane. It localises to the lysosome membrane. It is found in the cell membrane. It carries out the reaction a 1,2-diacyl-sn-glycero-3-phosphoethanolamine + a 1,2-diacyl-sn-glycero-3-phosphocholine = an N-acyl-1,2-diacyl-sn-glycero-3-phosphoethanolamine + a 2-acyl-sn-glycero-3-phosphocholine + H(+). The catalysed reaction is 1-hexadecanoyl-2-octadecanoyl-sn-glycero-3-phosphocholine + 1,2-di-(9Z-octadecenoyl)-sn-glycero-3-phosphoethanolamine = 2-octadecanoyl-sn-glycero-3-phosphocholine + N-hexadecanoyl-1,2-di-(9Z-octadecenoyl)-sn-glycero-3-phosphoethanolamine + H(+). The enzyme catalyses 1-octadecanoyl-2-hexadecanoyl-sn-glycero-3-phosphocholine + 1,2-di-(9Z-octadecenoyl)-sn-glycero-3-phosphoethanolamine = N-octadecanoyl-1,2-di-(9Z-octadecenoyl)-sn-glycero-3-phosphoethanolamine + 2-hexadecanoyl-sn-glycero-3-phosphocholine + H(+). It catalyses the reaction 1,2-di-(9Z-octadecenoyl)-sn-glycero-3-phosphoethanolamine + 1,2-dihexadecanoyl-sn-glycero-3-phosphocholine = N-hexadecanoyl-1,2-di-(9Z-octadecenoyl)-sn-glycero-3-phosphoethanolamine + 2-hexadecanoyl-sn-glycero-3-phosphocholine + H(+). It carries out the reaction 1,2-di-(5Z,8Z,11Z,14Z-eicosatetraenoyl)-sn-glycero-3-phosphocholine + 1,2-di-(9Z-octadecenoyl)-sn-glycero-3-phosphoethanolamine = N-(5Z,8Z,11Z,14Z-eicosatetraenoyl)-1,2-di-(9Z-octadecenoyl)-sn-glycero-3-phosphoethanolamine + 2-(5Z,8Z,11Z,14Z)-eicosatetraenoyl-sn-glycero-3-phosphocholine + H(+). The catalysed reaction is 2 1,2-di-(9Z-octadecenoyl)-sn-glycero-3-phosphoethanolamine = N,1,2-tri-(9Z-octadecenoyl)-sn-glycero-3-phosphoethanolamine + 2-(9Z-octadecenoyl)-sn-glycero-3-phosphoethanolamine + H(+). The enzyme catalyses 1-(1Z-octadecenyl)-2-(9Z-octadecenoyl)-sn-glycero-3-phosphoethanolamine + 1,2-dihexadecanoyl-sn-glycero-3-phosphocholine = 1-O-(1Z-octadecenoyl)-2-(9Z-octadecenoyl)-sn-glycero-3-phospho-N-hexadecanoyl-ethanolamine + 2-hexadecanoyl-sn-glycero-3-phosphocholine + H(+). It catalyses the reaction a 1,2-diacyl-sn-glycero-3-phosphocholine + H2O = a 1-acyl-sn-glycero-3-phosphocholine + a fatty acid + H(+). It carries out the reaction 1-hexadecanoyl-2-(5Z,8Z,11Z,14Z-eicosatetraenoyl)-sn-glycero-3-phosphocholine + H2O = 1-hexadecanoyl-sn-glycero-3-phosphocholine + (5Z,8Z,11Z,14Z)-eicosatetraenoate + H(+). The catalysed reaction is 1-hexadecanoyl-sn-glycero-3-phosphocholine + H2O = sn-glycerol 3-phosphocholine + hexadecanoate + H(+). Stimulated by cytosolic Ca(2+). Stimulated by anionic phospholipids such as phosphatidylserines, phosphatidates and phosphatidylinositols. Calcium-dependent N-acyltransferase involved in the biosynthesis of N-acyl ethanolamines (NAEs) in the brain. Transfers the sn-1 fatty acyl chain of phosphatidylcholine (fatty acyl donor) to the amine group of phosphatidylethanolamine (fatty acyl acceptor) to generate N-acyl phosphatidylethanolamine (NAPE). Similarly can use plasmenylethanolamine as a fatty acyl acceptor to form N-acyl plasmenylethanolamine (N-Acyl-PlsEt). Both NAPE and N-Acyl-PlsEt can serve as precursors of bioactive NAEs like N-arachidonoyl phosphatidylethanolamine also called anandamide. Has weak phospholipase A2 and lysophospholipase activities. Regulates intracellular membrane trafficking that requires modulation of membrane curvature as it occurs by enrichment in lysophospholipids. Promotes tubule formation involved in clathrin-independent endocytotic trafficking and cargo recycling. The chain is Cytosolic phospholipase A2 epsilon from Homo sapiens (Human).